A 394-amino-acid polypeptide reads, in one-letter code: DNA replication and repair protein RecF (394 aa).

Position 30-37 (30-37 (GSNGQGKT)) interacts with ATP.

It belongs to the RecF family.

The protein resides in the cytoplasm. The RecF protein is involved in DNA metabolism; it is required for DNA replication and normal SOS inducibility. RecF binds preferentially to single-stranded, linear DNA. It also seems to bind ATP. The sequence is that of DNA replication and repair protein RecF from Cutibacterium acnes (strain DSM 16379 / KPA171202) (Propionibacterium acnes).